We begin with the raw amino-acid sequence, 540 residues long: Putative serine protease F56F10.1 (540 aa).

Residues methionine 1–alanine 16 form the signal peptide. 2 N-linked (GlcNAc...) asparagine glycosylation sites follow: asparagine 58 and asparagine 87. The Charge relay system role is filled by serine 182. Residues asparagine 270, asparagine 300, asparagine 317, asparagine 343, asparagine 441, and asparagine 449 are each glycosylated (N-linked (GlcNAc...) asparagine). The Charge relay system role is filled by aspartate 453. Asparagine 475 is a glycosylation site (N-linked (GlcNAc...) asparagine). Catalysis depends on histidine 479, which acts as the Charge relay system.

It belongs to the peptidase S28 family.

This is Putative serine protease F56F10.1 from Caenorhabditis elegans.